A 362-amino-acid chain; its full sequence is Red-sensitive opsin (362 aa).

Residues 1–49 (MAAWEAAFAARRRHEEEDTTRDSVFTYTNSNNTRGPFEGPNYHIAPRWV) lie on the Extracellular side of the membrane. N31 is a glycosylation site (N-linked (GlcNAc...) asparagine). A helical membrane pass occupies residues 50–74 (YNLTSVWMIFVVAASVFTNGLVLVA). At 75–86 (TWKFKKLRHPLN) the chain is on the cytoplasmic side. The chain crosses the membrane as a helical span at residues 87–112 (WILVNLAVADLGETVIASTISVINQI). Topologically, residues 113–126 (SGYFILGHPMCVVE) are extracellular. A disulfide bond links C123 and C200. The helical transmembrane segment at 127–146 (GYTVSACGITALWSLAIISW) threads the bilayer. The Cytoplasmic portion of the chain corresponds to 147–165 (ERWFVVCKPFGNIKFDGKL). Residues 166 to 189 (AVAGILFSWLWSCAWTAPPIFGWS) form a helical membrane-spanning segment. Topologically, residues 190 to 215 (RYWPHGLKTSCGPDVFSGSSDPGVQS) are extracellular. A helical membrane pass occupies residues 216 to 243 (YMVVLMVTCCFFPLAIIILCYLQVWLAI). Topologically, residues 244–265 (RAVAAQQKESESTQKAEKEVSR) are cytoplasmic. Residues 266 to 289 (MVVVMIVAYCFCWGPYTFFACFAA) form a helical membrane-spanning segment. The Extracellular portion of the chain corresponds to 290–297 (ANPGYAFH). The chain crosses the membrane as a helical span at residues 298 to 322 (PLAAALPAYFAKSATIYNPIIYVFM). At K309 the chain carries N6-(retinylidene)lysine. Residues 323–362 (NRQFRNCILQLFGKKVDDGSEVSTSRTEVSSVSNSSVSPA) are Cytoplasmic-facing.

Belongs to the G-protein coupled receptor 1 family. Opsin subfamily. In terms of processing, phosphorylated on some or all of the serine and threonine residues present in the C-terminal region. As to expression, the color pigments are found in the cone photoreceptor cells.

The protein resides in the membrane. Its function is as follows. Visual pigments are the light-absorbing molecules that mediate vision. They consist of an apoprotein, opsin, covalently linked to cis-retinal. This Gallus gallus (Chicken) protein is Red-sensitive opsin.